A 1190-amino-acid chain; its full sequence is MTGRLVQYGRHRQRRSYARISEVLELPNLIEIQTSSYQWFLDEGLREMFKEISPIEDFSGNLSLEFIDYSLGEPKYSVEEAKERDVTYAAPLRVKVRLINKETGEVKEQDVFMGDFPLMTETGTFIINGAERVIVSQLVRSPSVYYSDKVDKNGKRGYSATVIPNRGAWLEYETDAKDVVYVRIDRTRKLPVTVLLRALGFSSDQEIIDLLGDNEYLRNTLEKDNTDSTEKALIEIYERLRPGEPPTLENAKSLLASRFFDPKRYDLASVGRYKINKKLHIKNRLFNQRLAETIADPETGEIIAEAGTMIDRRTLNRLLPYLEKGAGLQTYRPTEGVADGQISVQTVKIYAPNDPDNEKVINIIGNGFIAEDVKHITPADIIASISYFFNLLHGVGDTDDIDHLGNRRLRSVGELLQNQFRIGLSRMERVVRERMSIQDANTITPQQLINIRPVIAAIKEFFGSSQLSQFMDQTNPLAELTHKRRLSALGPGGLTRERAGFEVRDVHYSHYGRMCPIETPEGPNIGLINSLSTYAKVNKFGFIETPYRRVDPETGKVTDQIDYLTADEEDNYVVAQANVPLAEDGTFLEENVIARFRGENIVVKRDRVDYMDVSPKQVVSAATACIPFLENDDSNRALMGANMQRQAVPLLQPEAPIVGTGMEYVSAKDSGAAIICKHRGIVERVEAKEIWVRRLIEVDGKEVKGDLDKYRLLKFVRSNQGTCYNQRPIVKKGDIVEKGEILADGPSMDKGELALGRNVLVAFMTWDGYNYEDAIIMSERLVKEDVYTSIHIEEYEAESRDTKLGPEEITRDIPNVGEDALKNLDERGIVRIGAEVKDGDLLVGKVTPKGMTELTAEERLLHAIFGEKAREVRDTSLRVPHGGGGIVLDVKVFNREDGDELPPGVNQLVRVYIVQKRKISEGDKMAGRHGNKGVISRILPEEDMPFLPDGTPIDIMLNPLGVPSRMNIGQVFELHLGMAAKKLGLHIASPVFDGATEEDVWNILEEAGMARDAKTVLYDGRTGEPFDNRVSVGIMYMIKLAHMVDDKLHARSTGPYSLVTQQPLGGKAQFGGQRFGEMEVWALEAYGAAYTLQEILTVKSDDVVGRVKTYEAIVKGENIPEPGVPESFKVLIKELQSLGMDVTILTSDEQEINMENFDDDDDHAPDAIMVDVKPVESEEADEEKNAVTKE.

It belongs to the RNA polymerase beta chain family. As to quaternary structure, the RNAP catalytic core consists of 2 alpha, 1 beta, 1 beta' and 1 omega subunit. When a sigma factor is associated with the core the holoenzyme is formed, which can initiate transcription.

The catalysed reaction is RNA(n) + a ribonucleoside 5'-triphosphate = RNA(n+1) + diphosphate. Its function is as follows. DNA-dependent RNA polymerase catalyzes the transcription of DNA into RNA using the four ribonucleoside triphosphates as substrates. The protein is DNA-directed RNA polymerase subunit beta of Geobacillus thermodenitrificans (strain NG80-2).